A 457-amino-acid polypeptide reads, in one-letter code: Bifunctional protein GlmU (457 aa).

The pyrophosphorylase stretch occupies residues 1-230; that stretch reads MSKRYAVVLA…FEESLGVNDR (230 aa). UDP-N-acetyl-alpha-D-glucosamine-binding positions include 9–12, Lys23, Gln73, and 78–79; these read LAAG and GT. Asp103 lines the Mg(2+) pocket. UDP-N-acetyl-alpha-D-glucosamine contacts are provided by Gly140, Glu155, Asn170, and Asn228. Asn228 contributes to the Mg(2+) binding site. The linker stretch occupies residues 231–251; that stretch reads IALAEASKLMQRRINDNHMRN. Residues 252–457 form an N-acetyltransferase region; that stretch reads GVTLVNPENT…DYAKRLNHGK (206 aa). Positions 333 and 351 each coordinate UDP-N-acetyl-alpha-D-glucosamine. The active-site Proton acceptor is His363. UDP-N-acetyl-alpha-D-glucosamine contacts are provided by Tyr366 and Asn377. Acetyl-CoA-binding positions include 386–387, Ala423, and Arg440; that span reads NY.

This sequence in the N-terminal section; belongs to the N-acetylglucosamine-1-phosphate uridyltransferase family. In the C-terminal section; belongs to the transferase hexapeptide repeat family. In terms of assembly, homotrimer. It depends on Mg(2+) as a cofactor.

The protein localises to the cytoplasm. The enzyme catalyses alpha-D-glucosamine 1-phosphate + acetyl-CoA = N-acetyl-alpha-D-glucosamine 1-phosphate + CoA + H(+). It carries out the reaction N-acetyl-alpha-D-glucosamine 1-phosphate + UTP + H(+) = UDP-N-acetyl-alpha-D-glucosamine + diphosphate. It participates in nucleotide-sugar biosynthesis; UDP-N-acetyl-alpha-D-glucosamine biosynthesis; N-acetyl-alpha-D-glucosamine 1-phosphate from alpha-D-glucosamine 6-phosphate (route II): step 2/2. It functions in the pathway nucleotide-sugar biosynthesis; UDP-N-acetyl-alpha-D-glucosamine biosynthesis; UDP-N-acetyl-alpha-D-glucosamine from N-acetyl-alpha-D-glucosamine 1-phosphate: step 1/1. The protein operates within bacterial outer membrane biogenesis; LPS lipid A biosynthesis. Its function is as follows. Catalyzes the last two sequential reactions in the de novo biosynthetic pathway for UDP-N-acetylglucosamine (UDP-GlcNAc). The C-terminal domain catalyzes the transfer of acetyl group from acetyl coenzyme A to glucosamine-1-phosphate (GlcN-1-P) to produce N-acetylglucosamine-1-phosphate (GlcNAc-1-P), which is converted into UDP-GlcNAc by the transfer of uridine 5-monophosphate (from uridine 5-triphosphate), a reaction catalyzed by the N-terminal domain. The sequence is that of Bifunctional protein GlmU from Listeria welshimeri serovar 6b (strain ATCC 35897 / DSM 20650 / CCUG 15529 / CIP 8149 / NCTC 11857 / SLCC 5334 / V8).